The following is a 994-amino-acid chain: Phosphoenolpyruvate carboxylase (994 aa).

The interval 1-67 (MKAVRSDKTT…GRTREDKDHP (67 aa)) is disordered. 2 stretches are compositionally biased toward low complexity: residues 9–24 (TTQAATTAQAQKPAKA) and 34–57 (AAPQAANASARQPASAQAPAPKAN). Catalysis depends on residues histidine 204 and lysine 646.

This sequence belongs to the PEPCase type 1 family. Mg(2+) serves as cofactor.

It carries out the reaction oxaloacetate + phosphate = phosphoenolpyruvate + hydrogencarbonate. Functionally, forms oxaloacetate, a four-carbon dicarboxylic acid source for the tricarboxylic acid cycle. In Paraburkholderia xenovorans (strain LB400), this protein is Phosphoenolpyruvate carboxylase.